A 382-amino-acid polypeptide reads, in one-letter code: Galactokinase (382 aa).

34–37 (EHTD) is a binding site for substrate. An ATP-binding site is contributed by 124–130 (GAGLSSS). The Mg(2+) site is built by S130 and E162. D174 acts as the Proton acceptor in catalysis. Y223 contacts substrate.

Belongs to the GHMP kinase family. GalK subfamily.

It localises to the cytoplasm. The catalysed reaction is alpha-D-galactose + ATP = alpha-D-galactose 1-phosphate + ADP + H(+). It functions in the pathway carbohydrate metabolism; galactose metabolism. Functionally, catalyzes the transfer of the gamma-phosphate of ATP to D-galactose to form alpha-D-galactose-1-phosphate (Gal-1-P). The sequence is that of Galactokinase from Erwinia tasmaniensis (strain DSM 17950 / CFBP 7177 / CIP 109463 / NCPPB 4357 / Et1/99).